Consider the following 157-residue polypeptide: Small ribosomal subunit protein uS7 (157 aa).

Belongs to the universal ribosomal protein uS7 family. In terms of assembly, part of the 30S ribosomal subunit. Contacts proteins S9 and S11.

In terms of biological role, one of the primary rRNA binding proteins, it binds directly to 16S rRNA where it nucleates assembly of the head domain of the 30S subunit. Is located at the subunit interface close to the decoding center, probably blocks exit of the E-site tRNA. In Borrelia hermsii (strain HS1 / DAH), this protein is Small ribosomal subunit protein uS7.